A 280-amino-acid polypeptide reads, in one-letter code: MSAIDNLPPLREVIATHQLSARKSLGQNFLLDLNLTAKIARQAGDLTGCDVLEIGPGPGGLTRGLLSEGARKILAIEKDQRCLPALEDIAAAYPGRLEVINGDALEIDPLAHLTPPIRVAANLPYNVGTELLVRWLTPKEWPPFWQSLTLMFQREVAERIVAQPGSKAYGRLAILAQWRAEARIALSLPPGAFTPPPKVSSAVVHLTALPEPRYPADAAILSRVVAAAFNQRRKMLRASLKGVSPQIEDHLNAAGIPPTERAEQVSVEDFCALARSLEKG.

S-adenosyl-L-methionine-binding residues include Asn-28, Leu-30, Gly-55, Glu-77, Asp-103, and Asn-122.

This sequence belongs to the class I-like SAM-binding methyltransferase superfamily. rRNA adenine N(6)-methyltransferase family. RsmA subfamily.

The protein localises to the cytoplasm. It catalyses the reaction adenosine(1518)/adenosine(1519) in 16S rRNA + 4 S-adenosyl-L-methionine = N(6)-dimethyladenosine(1518)/N(6)-dimethyladenosine(1519) in 16S rRNA + 4 S-adenosyl-L-homocysteine + 4 H(+). Functionally, specifically dimethylates two adjacent adenosines (A1518 and A1519) in the loop of a conserved hairpin near the 3'-end of 16S rRNA in the 30S particle. May play a critical role in biogenesis of 30S subunits. The sequence is that of Ribosomal RNA small subunit methyltransferase A from Ruegeria sp. (strain TM1040) (Silicibacter sp.).